Reading from the N-terminus, the 141-residue chain is Putative pre-16S rRNA nuclease (141 aa).

This sequence belongs to the YqgF nuclease family.

The protein resides in the cytoplasm. Its function is as follows. Could be a nuclease involved in processing of the 5'-end of pre-16S rRNA. The polypeptide is Putative pre-16S rRNA nuclease (Cupriavidus pinatubonensis (strain JMP 134 / LMG 1197) (Cupriavidus necator (strain JMP 134))).